The sequence spans 41 residues: IPQCRDVKESGQPNDKCRCNGKPCTVGKCTIARGDDNDKCT.

The Cell attachment site motif lies at R33–D35.

It belongs to the ornatin family.

It is found in the secreted. Its function is as follows. Potent inhibitor of fibrinogen interaction with platelet receptors expressed on glycoprotein IIb-IIIa complex. May prevent blood from clotting during either feeding and/or storage of ingested blood. In Placobdella ornata (Turtle leech), this protein is Ornatin-A2.